Reading from the N-terminus, the 288-residue chain is Short chain aldehyde dehydrogenase 1 (288 aa).

Residues 26–28 (SGI), Asp-47, 72–73 (DV), and 99–101 (NAG) each bind NAD(+). The active-site Proton donor is Ser-153. Ser-153 and Tyr-166 together coordinate substrate. NAD(+)-binding residues include Tyr-166, Lys-170, and Thr-201. Residue Tyr-166 is the Proton acceptor of the active site. Lys-170 (proton donor/acceptor) is an active-site residue.

It belongs to the short-chain dehydrogenases/reductases (SDR) family. In terms of assembly, homodimer. As to expression, expressed in mature seeds.

It catalyses the reaction 4,5,8-trihydroxycasbene + 2 NAD(+) = jolkinol C + 2 NADH + 2 H(+). The catalysed reaction is a secondary alcohol + NAD(+) = a ketone + NADH + H(+). It carries out the reaction a primary alcohol + NAD(+) = an aldehyde + NADH + H(+). The protein operates within secondary metabolite biosynthesis; terpenoid biosynthesis. In terms of biological role, involved in the biosynthesis of macrocyclic lathyrane type diterpenoids (also called Euphorbia factors) natural products, including the cyclization route from casbene to jolkinol C, a precursor for ingenol mebutate that is used to treat actinic keratosis, a precancerous skin condition. Catalyzes the conversion of 4,5,8-trihydroxycasbene into jolkinol C in presence of NAD. Also mediates the formation of casbene dione derivative and 4-ketocasbene from 4-hydroxy-8-ketocasbene and 4-hydroxycasbene, respectively. Together with CYP71D445, triggers the biosynthesis of 8-ketocasbene from 8-hydroxycasbene. The polypeptide is Short chain aldehyde dehydrogenase 1 (Euphorbia lathyris (Caper spurge)).